Reading from the N-terminus, the 408-residue chain is MAFSCFDKFSYTYCYQCMHGPDGCMVPSRNGEGTELYAHSEELEAKLRELARRGHMEIEKELALEKKTYGSHIKILILGGPLSGKSTIFKQMQIIHVDGFKTDQELIQYRGLIDNNIRDIYLQLIAGSRVVGIPLDPIEHITYEIDEIYAPMSDAFSVRTISELLEPLTEFWNSKQIQEIYKRRCEFELLDSTKYYLENLTRIADPTYLPNQEDIVHSRKATMSINSIVFEYTGVSLLMIDVGGQRSERKKWLHLFDDAKVVLFVIDLTGYAKRSEESRMELSRFPKFFRDVGSNAYDMKVALKIFNEVAAASALANAVFLLFFNKVDLFKEILSQVNLQPCFSKFDGENTYEETSKYICEKFIRAASSKKSVFPHFTTATNTENVKLVFRACMESVFKANAKATGLS.

GTP is bound by residues 39–46 (HSEELEAK), 79–86 (GGPLSGKS), 201–205 (TRIAD), 216–222 (VHSRKAT), 241–245 (DVGGQ), 285–288 (FPKF), 325–328 (NKVD), and A380. Positions 71 to 408 (SHIKILILGG…KANAKATGLS (338 aa)) constitute a G-alpha domain. The tract at residues 74-87 (KILILGGPLSGKST) is G1 motif. Mg(2+) is bound at residue S86. A G2 motif region spans residues 214–222 (DIVHSRKAT). Residue T222 coordinates Mg(2+). The interval 237–246 (LLMIDVGGQR) is G3 motif. The tract at residues 321–328 (LLFFNKVD) is G4 motif. A G5 motif region spans residues 378-383 (TTATNT).

Belongs to the G-alpha family. In terms of assembly, g proteins are composed of 3 units; alpha, beta and gamma. The alpha chain contains the guanine nucleotide binding site. Interacts with the dopamine receptor dop-2 (via C-terminus); the interaction is direct.

In terms of biological role, guanine nucleotide-binding proteins (G proteins) are involved as modulators or transducers in various transmembrane signaling systems. In association with the G-protein coupled dopamine receptor dop-2, modulates two types of learning: touch habituation and chemosensory associative conditioning. The polypeptide is Guanine nucleotide-binding protein alpha-14 subunit (Caenorhabditis elegans).